We begin with the raw amino-acid sequence, 264 residues long: MTKFSSFSLFFLIVGAYMTHVCFNMEIIGGKEVSPHSRPFMASIQYGGHHVCGGVLIDPQWVLTAAHCQYRFTKGQSPTVVLGAHSLSKNEASKQTLEIKKFIPFSRVTSDPQSNDIMLVKLQTAAKLNKHVKMLHIRSKTSLRSGTKCKVTGWGATDPDSLRPSDTLREVTVTVLSRKLCNSQSYYNGDPFITKDMVCAGDAKGQKDSCKGDSGGPLICKGVFHAIVSGGHECGVATKPGIYTLLTKKYQTWIKSNLVPPHTN.

The signal sequence occupies residues 1-24; sequence MTKFSSFSLFFLIVGAYMTHVCFN. A propeptide spans 25–26 (activation peptide); it reads ME. A Peptidase S1 domain is found at 27–259; the sequence is IIGGKEVSPH…YQTWIKSNLV (233 aa). C52 and C68 are disulfide-bonded. Active-site charge relay system residues include H67 and D116. 3 cysteine pairs are disulfide-bonded: C149-C220, C181-C199, and C210-C234. The active-site Charge relay system is the S214.

The protein belongs to the peptidase S1 family. Granzyme subfamily. As to expression, expressed in lung, spleen, thymus and peripheral blood leukocytes.

The protein resides in the secreted. It localises to the cytoplasmic granule. The protein is Granzyme K (GZMK) of Homo sapiens (Human).